The following is a 312-amino-acid chain: MELLKRKLYAKILMMVMVIWIAPMTNGHDHASHVPGGRPGAHPSHGAHPAHGAHPSHGAHPSHGAHPSHGAHPSHGALPSHGGQVPHSGWGHGRATFYGDINGGETQQGACGYGDLHKQGYGLETAALSTALFNNGSRCGACYEIMCEHAPQWCLPGSIKITATNFCPPDFTKPNDNWCNPPQKHFDLSQPMFLKIAKYKAGVVPVKFRRVPCAKIGGVKFEIKGNPHFLMILPYNVGGAGAVRAMQIKGTRTQWIAMKKNWGQIWSTGVVLTGQCLSFRLTTSDGVMKEFIDVTPPDWKCNGQSFDGKVNF.

The N-terminal stretch at 1-27 (MELLKRKLYAKILMMVMVIWIAPMTNG) is a signal peptide. A disordered region spans residues 31 to 86 (ASHVPGGRPGAHPSHGAHPAHGAHPSHGAHPSHGAHPSHGAHPSHGALPSHGGQVP). Positions 40–77 (GAHPSHGAHPAHGAHPSHGAHPSHGAHPSHGAHPSHGA) are enriched in low complexity. 6 repeat units span residues 42–47 (HPSHGA), 48–53 (HPAHGA), 54–59 (HPSHGA), 60–65 (HPSHGA), 66–71 (HPSHGA), and 72–77 (HPSHGA). The 6 X 6 AA tandem repeats of H-P-S-H-G-A stretch occupies residues 42 to 77 (HPSHGAHPAHGAHPSHGAHPSHGAHPSHGAHPSHGA). One can recognise an Expansin-like EG45 domain in the interval 108-218 (QGACGYGDLH…RRVPCAKIGG (111 aa)). Residues 228–307 (HFLMILPYNV…DWKCNGQSFD (80 aa)) form the Expansin-like CBD domain.

The protein belongs to the expansin family. Expansin A subfamily.

It is found in the secreted. It localises to the cell wall. Its subcellular location is the membrane. Causes loosening and extension of plant cell walls by disrupting non-covalent bonding between cellulose microfibrils and matrix glucans. No enzymatic activity has been found. This Arabidopsis thaliana (Mouse-ear cress) protein is Expansin-A24 (EXPA24).